Consider the following 255-residue polypeptide: uncharacterized protein (255 aa).

[4Fe-4S] cluster is bound by residues Cys-122 and Cys-160.

In terms of assembly, homodimer. [4Fe-4S] cluster serves as cofactor.

This is an uncharacterized protein from Escherichia coli (strain K12).